Reading from the N-terminus, the 473-residue chain is GTPase Der (473 aa).

EngA-type G domains lie at 3 to 167 and 203 to 378; these read FTVA…GEDR and LRVA…KVWN. Residues 9-16, 56-60, 119-122, 209-216, 256-260, and 321-324 contribute to the GTP site; these read GRPNVGKS, DTAGL, NKSE, GRPNAGKS, DTAGM, and NKWD. Residues 379-463 enclose the KH-like domain; sequence KRISTARLNR…PIRIHFRSPD (85 aa).

It belongs to the TRAFAC class TrmE-Era-EngA-EngB-Septin-like GTPase superfamily. EngA (Der) GTPase family. In terms of assembly, associates with the 50S ribosomal subunit.

Functionally, GTPase that plays an essential role in the late steps of ribosome biogenesis. The chain is GTPase Der from Rhizobium johnstonii (strain DSM 114642 / LMG 32736 / 3841) (Rhizobium leguminosarum bv. viciae).